Here is a 460-residue protein sequence, read N- to C-terminus: Mogroside I-E synthase (460 aa).

H25 (proton acceptor) is an active-site residue. The Charge relay role is filled by D114. UDP-alpha-D-glucose is bound by residues S286, C339, Q341, W359, N360, S361, E364, D380, and Q381.

Belongs to the UDP-glycosyltransferase family. As to expression, highly expressed in young fruits 15 days after anthesis (15-DAA).

It catalyses the reaction mogrol + UDP-alpha-D-glucose = mogroside IE + UDP + H(+). The enzyme catalyses mogroside I-A1 + UDP-alpha-D-glucose = mogroside IIE + UDP + H(+). It carries out the reaction mogroside II-A1 + UDP-alpha-D-glucose = mogroside IIIX + UDP + H(+). The catalysed reaction is mogroside II-A + UDP-alpha-D-glucose = mogroside III + UDP + H(+). It catalyses the reaction mogroside III-A1 + UDP-alpha-D-glucose = siamenoside I + UDP + H(+). The protein operates within secondary metabolite biosynthesis; terpenoid biosynthesis. Its function is as follows. UDP-glycosyltransferase involved in the biosynthesis of cucurbitacin and mogroside tetracyclic triterpene natural products (e.g. siamenoside I and mogrosides IV, V and VI). Cucurbitacins have cytotoxic properties and exhibit deterrent taste as a defense barrier against herbivores. Mogrosides are nonsugar highly oxygenated compounds used as high-intensity zero-calorie sweeteners; they also possess pharmacological properties such as regulating immunity, lowering blood sugar and lipid levels, protecting the liver, and acting as antioxidants and antitumor agents. Catalyzes the C3 primary glucosylation of mogrol, mogroside I-A1, mogroside II-A1, mogroside II-A and mogroside III-A1. This Siraitia grosvenorii (Monk's fruit) protein is Mogroside I-E synthase.